Here is a 454-residue protein sequence, read N- to C-terminus: Protein pid-2 (454 aa).

Positions 31 to 61 (VQNNQKEHPPVQEIKTVSSKSKEHRVSSSRK) are disordered. A compositionally biased stretch (basic and acidic residues) spans 50 to 61 (KSKEHRVSSSRK).

As to quaternary structure, may interact with pid-4, pid-5, app-1 and prmt-5. Expressed throughout the mitotic and meiotic regions of the germline and in oocytes.

The protein resides in the cytoplasm. It is found in the perinuclear region. The protein localises to the cytoplasmic granule. Its function is as follows. Involved in gene silencing mediated by a class of 21 nucleotide PIWI-interacting RNAs (piRNAs) that possess a uracil residue at the 5'-end (also called 21U-RNAs) and that guide the Piwi protein prg-1 to its DNA targets for silencing. Not required for the biogenesis of 21U-RNAs. May also be involved in gene silencing mediated by 22G-siRNAs (a class of 22 nucleotide endogenous small interfering RNAs (siRNAs) that possess a triphosphorylated guanine residue at the 5'-end) and 26G-siRNAs (a class of 26 nucleotide siRNAs that possess a guanine residue at the 5'-end). Required for the biogenesis of secondary and tertiary 22G-siRNAs from many loci. Specifically, promotes the production of 22G-siRNAs from the 5' end of target mRNAs. May play a role in the production of 26G-siRNAs. Plays a role in small RNA-directed transgenerational epigenetic inheritance (also called RNAe) over several generations and germline immortality. Together with the argonaut protein hrde-1, promotes the silencing of the DNA transposable element Tc1. Required for the formation of liquid-like condensates in the cytoplasm called Z granules, playing a role in maintaining their assembly, viscosity and morphology in adult germ cells, and localization in early embryos. In Caenorhabditis elegans, this protein is Protein pid-2.